The primary structure comprises 399 residues: Large envelope protein (399 aa).

Position 1 is an N-acetylmethionine (Met-1). A lipid anchor (N-myristoyl glycine; by host) is attached at Gly-2. The pre-S1 stretch occupies residues Gly-2–Ala-118. Residues Gly-2–Asn-173 form a pre-S region. Residues Gly-2 to Gly-180 are Virion surface; in external conformation-facing. Residues Gly-2–Arg-252 are Intravirion; in internal conformation-facing. N-linked (GlcNAc...) asparagine glycosylation occurs at Ser-4. Residues Pro-69–Gln-117 form a disordered region. The interval Met-119 to Asn-173 is pre-S2. A helical membrane pass occupies residues Phe-181–Ile-201. The Intravirion; in external conformation segment spans residues Pro-202–Arg-252. The chain crosses the membrane as a helical span at residues Phe-253–Tyr-273. Residues Gln-274–Ser-347 lie on the Virion surface side of the membrane. Asn-319 is a glycosylation site (N-linked (GlcNAc...) asparagine; by host). The helical transmembrane segment at Leu-348 to Ile-368 threads the bilayer. Residues Trp-369–Trp-374 lie on the Intravirion side of the membrane. Residues Gly-375–Val-397 form a helical membrane-spanning segment. The Virion surface portion of the chain corresponds to Tyr-398–Ile-399.

This sequence belongs to the orthohepadnavirus major surface antigen family. As to quaternary structure, in its internal form (Li-HBsAg), interacts with the capsid protein and with the isoform S. Interacts with host chaperone CANX. In terms of assembly, associates with host chaperone CANX through its pre-S2 N glycan; this association may be essential for isoform M proper secretion. Interacts with isoform L. Interacts with the antigens of satellite virus HDV (HDVAgs); this interaction is required for encapsidation of HDV genomic RNA. Isoform M is N-terminally acetylated by host at a ratio of 90%, and N-glycosylated by host at the pre-S2 region. In terms of processing, myristoylated.

It is found in the virion membrane. Functionally, the large envelope protein exists in two topological conformations, one which is termed 'external' or Le-HBsAg and the other 'internal' or Li-HBsAg. In its external conformation the protein attaches the virus to cell receptors and thereby initiating infection. This interaction determines the species specificity and liver tropism. This attachment induces virion internalization predominantly through caveolin-mediated endocytosis. The large envelope protein also assures fusion between virion membrane and endosomal membrane. In its internal conformation the protein plays a role in virion morphogenesis and mediates the contact with the nucleocapsid like a matrix protein. The middle envelope protein plays an important role in the budding of the virion. It is involved in the induction of budding in a nucleocapsid independent way. In this process the majority of envelope proteins bud to form subviral lipoprotein particles of 22 nm of diameter that do not contain a nucleocapsid. The sequence is that of Large envelope protein from Hepatitis B virus genotype G (isolate IG29227/2000) (HBV-G).